The primary structure comprises 207 residues: Arginine exporter protein ArgO (207 aa).

6 consecutive transmembrane segments (helical) span residues 1-21 (MLST…PLGP), 42-62 (LCAI…SALL), 67-87 (LLLQ…GWGA), 111-131 (VVAI…DTIV), 150-170 (FGAA…AAWF), and 185-205 (GFIC…GLLI).

The protein belongs to the LysE/ArgO transporter (TC 2.A.75) family.

The protein localises to the cell inner membrane. It catalyses the reaction L-arginine(in) = L-arginine(out). Its function is as follows. Involved in the export of arginine. Important to control the intracellular level of arginine and the correct balance between arginine and lysine. This is Arginine exporter protein ArgO from Photorhabdus laumondii subsp. laumondii (strain DSM 15139 / CIP 105565 / TT01) (Photorhabdus luminescens subsp. laumondii).